Here is a 201-residue protein sequence, read N- to C-terminus: Recombination protein RecR (201 aa).

The segment at 60-75 (CSVCGNVDTSDPCTIC) adopts a C4-type zinc-finger fold. A Toprim domain is found at 83–178 (ATLIVVEDVS…RVTKLAHGVP (96 aa)).

It belongs to the RecR family.

In terms of biological role, may play a role in DNA repair. It seems to be involved in an RecBC-independent recombinational process of DNA repair. It may act with RecF and RecO. In Chelativorans sp. (strain BNC1), this protein is Recombination protein RecR.